The primary structure comprises 124 residues: Holo-[acyl-carrier-protein] synthase (124 aa).

Residues Asp5 and Glu51 each contribute to the Mg(2+) site.

This sequence belongs to the P-Pant transferase superfamily. AcpS family. The cofactor is Mg(2+).

It localises to the cytoplasm. The enzyme catalyses apo-[ACP] + CoA = holo-[ACP] + adenosine 3',5'-bisphosphate + H(+). Functionally, transfers the 4'-phosphopantetheine moiety from coenzyme A to a Ser of acyl-carrier-protein. This is Holo-[acyl-carrier-protein] synthase from Hydrogenobaculum sp. (strain Y04AAS1).